Here is a 173-residue protein sequence, read N- to C-terminus: Mesencephalic astrocyte-derived neurotrophic factor homolog (173 aa).

The signal sequence occupies residues 1–22; the sequence is MNTSHIVLMICFIVGVGQTALA. 4 disulfide bridges follow: C28/C114, C31/C103, C61/C72, and C148/C151.

This sequence belongs to the ARMET family.

The protein localises to the secreted. Required during the maturation of the embryonic nervous system for maintenance of neuronal and cuticular connectivity. Essential for maintenance of dopaminergic neurons and dopamine levels. In Drosophila virilis (Fruit fly), this protein is Mesencephalic astrocyte-derived neurotrophic factor homolog.